Reading from the N-terminus, the 338-residue chain is Lipoate-protein ligase A (338 aa).

One can recognise a BPL/LPL catalytic domain in the interval 29–216; sequence SPDQRVLFLW…AFFNYYDEKV (188 aa). Residues Arg-71, 76-79, and Lys-134 contribute to the ATP site; that span reads GAVF. (R)-lipoate is bound at residue Lys-134.

It belongs to the LplA family. As to quaternary structure, monomer.

The protein resides in the cytoplasm. It catalyses the reaction L-lysyl-[lipoyl-carrier protein] + (R)-lipoate + ATP = N(6)-[(R)-lipoyl]-L-lysyl-[lipoyl-carrier protein] + AMP + diphosphate + H(+). It functions in the pathway protein modification; protein lipoylation via exogenous pathway; protein N(6)-(lipoyl)lysine from lipoate: step 1/2. Its pathway is protein modification; protein lipoylation via exogenous pathway; protein N(6)-(lipoyl)lysine from lipoate: step 2/2. Catalyzes both the ATP-dependent activation of exogenously supplied lipoate to lipoyl-AMP and the transfer of the activated lipoyl onto the lipoyl domains of lipoate-dependent enzymes. The sequence is that of Lipoate-protein ligase A from Yersinia enterocolitica serotype O:8 / biotype 1B (strain NCTC 13174 / 8081).